We begin with the raw amino-acid sequence, 435 residues long: Trigger factor (435 aa).

The PPIase FKBP-type domain occupies 163-248 (GDRVTIDFEG…LTRIEAQNLP (86 aa)).

It belongs to the FKBP-type PPIase family. Tig subfamily.

It is found in the cytoplasm. The catalysed reaction is [protein]-peptidylproline (omega=180) = [protein]-peptidylproline (omega=0). Its function is as follows. Involved in protein export. Acts as a chaperone by maintaining the newly synthesized protein in an open conformation. Functions as a peptidyl-prolyl cis-trans isomerase. This is Trigger factor from Leptothrix cholodnii (strain ATCC 51168 / LMG 8142 / SP-6) (Leptothrix discophora (strain SP-6)).